A 371-amino-acid polypeptide reads, in one-letter code: Flagellar P-ring protein (371 aa).

The N-terminal stretch at 1-21 (MSRSFFATVLGLALAAMTVMA) is a signal peptide.

This sequence belongs to the FlgI family. The basal body constitutes a major portion of the flagellar organelle and consists of four rings (L,P,S, and M) mounted on a central rod.

The protein resides in the periplasm. Its subcellular location is the bacterial flagellum basal body. Its function is as follows. Assembles around the rod to form the L-ring and probably protects the motor/basal body from shearing forces during rotation. This chain is Flagellar P-ring protein, found in Caulobacter sp. (strain K31).